A 490-amino-acid polypeptide reads, in one-letter code: Cytochrome P450 71B29 (490 aa).

The helical transmembrane segment at 1 to 21 threads the bilayer; that stretch reads MAIILCFLILLPLILIFLKKL. Cys440 contacts heme.

This sequence belongs to the cytochrome P450 family. Heme is required as a cofactor.

It is found in the membrane. This chain is Cytochrome P450 71B29 (CYP71B29), found in Arabidopsis thaliana (Mouse-ear cress).